Consider the following 198-residue polypeptide: Ribonuclease 3-like protein 1 (198 aa).

The span at 85–110 shows a compositional bias: basic and acidic residues; it reads KKLAPKPDEEHTTTTKPISKDDESKT. A disordered region spans residues 85-115; sequence KKLAPKPDEEHTTTTKPISKDDESKTRRGSA. The 78-residue stretch at 114–191 folds into the DRBM domain; sequence SAKSVLHEMC…AEGALWYLEH (78 aa).

This Arabidopsis thaliana (Mouse-ear cress) protein is Ribonuclease 3-like protein 1 (RTL1).